The sequence spans 320 residues: Methionyl-tRNA formyltransferase (320 aa).

111 to 114 (SLLP) provides a ligand contact to (6S)-5,6,7,8-tetrahydrofolate.

The protein belongs to the Fmt family.

It catalyses the reaction L-methionyl-tRNA(fMet) + (6R)-10-formyltetrahydrofolate = N-formyl-L-methionyl-tRNA(fMet) + (6S)-5,6,7,8-tetrahydrofolate + H(+). Attaches a formyl group to the free amino group of methionyl-tRNA(fMet). The formyl group appears to play a dual role in the initiator identity of N-formylmethionyl-tRNA by promoting its recognition by IF2 and preventing the misappropriation of this tRNA by the elongation apparatus. This Bifidobacterium adolescentis (strain ATCC 15703 / DSM 20083 / NCTC 11814 / E194a) protein is Methionyl-tRNA formyltransferase.